The primary structure comprises 199 residues: Homeobox protein ceh-19 (199 aa).

Positions 1 to 42 are disordered; sequence MAFNIESLLEKKSNPVEEGNDFEEENDSEKNGEEDEEEEEKN. The span at 18-40 shows a compositional bias: acidic residues; it reads EGNDFEEENDSEKNGEEDEEEEE. Residues 94 to 153 constitute a DNA-binding region (homeobox); the sequence is ERKPRQAYSARQLDRLETEFQTDKYLSVNKRIQLSQTLNLTETQIKTWFQNRRTKWKKQL.

The protein localises to the nucleus. Its function is as follows. Probable transcription factor. Required for MC motor neuron differentiation and function, including role in modulating pharyngeal pumping. Regulates gene expression of FMRFamide-like neuropeptide flp-2 in MC motor neurons. May act downstream of transcription factor pha-4. This chain is Homeobox protein ceh-19 (ceh-19), found in Caenorhabditis elegans.